Consider the following 905-residue polypeptide: Translation initiation factor IF-2 (905 aa).

Residues 50 to 62 are compositionally biased toward basic and acidic residues; it reads HYEAKGGEDKAAE. The interval 50–306 is disordered; it reads HYEAKGGEDK…QKHEVGGVRL (257 aa). Low complexity predominate over residues 63–75; that stretch reads KNAPAATPASASK. The span at 89 to 125 shows a compositional bias: pro residues; sequence GPKPSAAPKPGAAPKPGGAPKPGGAPKPGATPKPGGA. Low complexity predominate over residues 161–171; that stretch reads PFSTGSSSDRP. The segment covering 233–276 has biased composition (gly residues); it reads GSGGGGRGRGGRGGGPGHGGPGHGGFRGRGGRRGGTAGAFGRPG. Positions 280 to 290 are enriched in basic residues; the sequence is RRGKKSKRQKR. Over residues 291–302 the composition is skewed to basic and acidic residues; it reads HEFEEQQKHEVG. Positions 401 to 575 constitute a tr-type G domain; it reads KRPPVVTVMG…LTADAALELT (175 aa). A G1 region spans residues 410 to 417; that stretch reads GHVDHGKT. 410-417 serves as a coordination point for GTP; sequence GHVDHGKT. Residues 435-439 are G2; the sequence is GITQG. The tract at residues 460–463 is G3; that stretch reads DTPG. Residues 460-464 and 514-517 each bind GTP; these read DTPGH and NKID. Positions 514–517 are G4; that stretch reads NKID. The segment at 550–552 is G5; the sequence is SAK.

This sequence belongs to the TRAFAC class translation factor GTPase superfamily. Classic translation factor GTPase family. IF-2 subfamily.

It localises to the cytoplasm. Functionally, one of the essential components for the initiation of protein synthesis. Protects formylmethionyl-tRNA from spontaneous hydrolysis and promotes its binding to the 30S ribosomal subunits. Also involved in the hydrolysis of GTP during the formation of the 70S ribosomal complex. The sequence is that of Translation initiation factor IF-2 from Corynebacterium aurimucosum (strain ATCC 700975 / DSM 44827 / CIP 107346 / CN-1) (Corynebacterium nigricans).